A 309-amino-acid polypeptide reads, in one-letter code: Acetylglutamate kinase (309 aa).

Substrate contacts are provided by residues 82-83, arginine 104, and asparagine 206; that span reads GG.

It belongs to the acetylglutamate kinase family. ArgB subfamily.

It localises to the cytoplasm. It catalyses the reaction N-acetyl-L-glutamate + ATP = N-acetyl-L-glutamyl 5-phosphate + ADP. It participates in amino-acid biosynthesis; L-arginine biosynthesis; N(2)-acetyl-L-ornithine from L-glutamate: step 2/4. Its function is as follows. Catalyzes the ATP-dependent phosphorylation of N-acetyl-L-glutamate. The protein is Acetylglutamate kinase of Cupriavidus pinatubonensis (strain JMP 134 / LMG 1197) (Cupriavidus necator (strain JMP 134)).